The sequence spans 265 residues: 3-deoxy-manno-octulosonate cytidylyltransferase 2 (265 aa).

Belongs to the KdsB family.

It localises to the cytoplasm. The enzyme catalyses 3-deoxy-alpha-D-manno-oct-2-ulosonate + CTP = CMP-3-deoxy-beta-D-manno-octulosonate + diphosphate. It functions in the pathway nucleotide-sugar biosynthesis; CMP-3-deoxy-D-manno-octulosonate biosynthesis; CMP-3-deoxy-D-manno-octulosonate from 3-deoxy-D-manno-octulosonate and CTP: step 1/1. Its pathway is bacterial outer membrane biogenesis; lipopolysaccharide biosynthesis. In terms of biological role, activates KDO (a required 8-carbon sugar) for incorporation into bacterial lipopolysaccharide in Gram-negative bacteria. This chain is 3-deoxy-manno-octulosonate cytidylyltransferase 2, found in Burkholderia lata (strain ATCC 17760 / DSM 23089 / LMG 22485 / NCIMB 9086 / R18194 / 383).